Consider the following 314-residue polypeptide: tRNA pseudouridine synthase B (314 aa).

His43 is a binding site for substrate. Asp48 functions as the Nucleophile in the catalytic mechanism. 3 residues coordinate substrate: Tyr76, Tyr179, and Leu200.

The protein belongs to the pseudouridine synthase TruB family. Type 1 subfamily.

It carries out the reaction uridine(55) in tRNA = pseudouridine(55) in tRNA. Functionally, responsible for synthesis of pseudouridine from uracil-55 in the psi GC loop of transfer RNAs. The protein is tRNA pseudouridine synthase B of Escherichia coli O157:H7.